The sequence spans 130 residues: Probable 4-amino-4-deoxy-L-arabinose-phosphoundecaprenol flippase subunit ArnF (130 aa).

The Cytoplasmic segment spans residues 1 to 4 (MGYG). Residues 5 to 25 (WALFSVALVSAAQLLLKWVMM) traverse the membrane as a helical segment. Over 26 to 44 (HLPPLGALRLWLDPAYAEP) the chain is Periplasmic. The helical transmembrane segment at 45 to 65 (LALLMGGLLAYVCSMGCWFMA) threads the bilayer. Topologically, residues 66-74 (LRRLPLNKA) are cytoplasmic. A helical membrane pass occupies residues 75 to 95 (YPLLSLSYVLVAACALMIPEF). Over 96–103 (NERFTFSR) the chain is Periplasmic. Residues 104–124 (LMGVALICGGLLLICLPAGGK) form a helical membrane-spanning segment. The Cytoplasmic segment spans residues 125-130 (GDTPRR).

The protein belongs to the ArnF family. As to quaternary structure, heterodimer of ArnE and ArnF.

The protein localises to the cell inner membrane. The protein operates within bacterial outer membrane biogenesis; lipopolysaccharide biosynthesis. Translocates 4-amino-4-deoxy-L-arabinose-phosphoundecaprenol (alpha-L-Ara4N-phosphoundecaprenol) from the cytoplasmic to the periplasmic side of the inner membrane. This is Probable 4-amino-4-deoxy-L-arabinose-phosphoundecaprenol flippase subunit ArnF from Sodalis glossinidius (strain morsitans).